The chain runs to 361 residues: Chorismate synthase (361 aa).

2 residues coordinate NADP(+): arginine 48 and arginine 54. Residues 125 to 127 (RSS), 238 to 239 (NA), glycine 278, 293 to 297 (KPTSS), and arginine 319 contribute to the FMN site.

Belongs to the chorismate synthase family. As to quaternary structure, homotetramer. It depends on FMNH2 as a cofactor.

The enzyme catalyses 5-O-(1-carboxyvinyl)-3-phosphoshikimate = chorismate + phosphate. Its pathway is metabolic intermediate biosynthesis; chorismate biosynthesis; chorismate from D-erythrose 4-phosphate and phosphoenolpyruvate: step 7/7. Its function is as follows. Catalyzes the anti-1,4-elimination of the C-3 phosphate and the C-6 proR hydrogen from 5-enolpyruvylshikimate-3-phosphate (EPSP) to yield chorismate, which is the branch point compound that serves as the starting substrate for the three terminal pathways of aromatic amino acid biosynthesis. This reaction introduces a second double bond into the aromatic ring system. In Enterobacter sp. (strain 638), this protein is Chorismate synthase.